Reading from the N-terminus, the 1349-residue chain is Aldehyde oxidase 2 (1349 aa).

In terms of domain architecture, 2Fe-2S ferredoxin-type spans 8–96 (DELVFFVNGR…GAAVTTVEGV (89 aa)). 4 residues coordinate [2Fe-2S] cluster: C47, C52, C55, and C78. Q117 is a binding site for Mo-molybdopterin. The [2Fe-2S] cluster site is built by C118, C121, C153, and C155. C155 contacts Mo-molybdopterin. An FAD-binding PCMH-type domain is found at 240–425 (FYGERVTWIS…ESVHIPHSQK (186 aa)). FAD is bound by residues 268-275 (LVVGNTSL), A349, S358, H362, D371, and L415. Residues 816–817 (GF), 1098–1101 (ASVG), Q1213, and L1278 each bind Mo-molybdopterin. E1280 (proton acceptor; for azaheterocycle hydroxylase activity) is an active-site residue.

The protein belongs to the xanthine dehydrogenase family. As to quaternary structure, homodimer. [2Fe-2S] cluster is required as a cofactor. It depends on FAD as a cofactor. Mo-molybdopterin serves as cofactor. Only detected at very few levels in nasal mucosa.

It localises to the cytoplasm. It carries out the reaction an aldehyde + O2 + H2O = a carboxylate + H2O2 + H(+). Its function is as follows. Oxidase with broad substrate specificity, oxidizing aromatic azaheterocycles, such as phthalazine, as well as aldehydes, such as benzaldehyde and retinal. The chain is Aldehyde oxidase 2 (AOX2) from Macaca fascicularis (Crab-eating macaque).